The primary structure comprises 98 residues: Co-chaperonin GroES (98 aa).

It belongs to the GroES chaperonin family. As to quaternary structure, heptamer of 7 subunits arranged in a ring. Interacts with the chaperonin GroEL.

Its subcellular location is the cytoplasm. In terms of biological role, together with the chaperonin GroEL, plays an essential role in assisting protein folding. The GroEL-GroES system forms a nano-cage that allows encapsulation of the non-native substrate proteins and provides a physical environment optimized to promote and accelerate protein folding. GroES binds to the apical surface of the GroEL ring, thereby capping the opening of the GroEL channel. This chain is Co-chaperonin GroES, found in Allorhizobium ampelinum (strain ATCC BAA-846 / DSM 112012 / S4) (Agrobacterium vitis (strain S4)).